The following is a 139-amino-acid chain: Small ribosomal subunit protein uS11 (139 aa).

Belongs to the universal ribosomal protein uS11 family. As to quaternary structure, part of the 30S ribosomal subunit.

In terms of biological role, located on the platform of the 30S subunit. In Pyrobaculum islandicum (strain DSM 4184 / JCM 9189 / GEO3), this protein is Small ribosomal subunit protein uS11.